We begin with the raw amino-acid sequence, 400 residues long: Hyaluronan and proteoglycan link protein 4 (400 aa).

Positions 1 to 30 are cleaved as a signal peptide; sequence MACAPGALGHRALWAVAWGLLLLVPVLAGA. The region spanning 47–155 is the Ig-like C2-type domain; the sequence is SVVVQTAPGQ…VTNELEDDVG (109 aa). Cystine bridges form between C69/C144, C186/C264, C210/C231, C291/C361, and C316/C337. A glycan (N-linked (GlcNAc...) asparagine) is linked at N133. 2 consecutive Link domains span residues 164–266 and 271–363; these read VVFP…FCFT and GRVF…YCYR.

Belongs to the HAPLN family. In terms of tissue distribution, expressed predominantly in brain where it is found mainly throughout the midbrain and hindbrain in a perineuronal net pattern.

The protein resides in the secreted. Its subcellular location is the extracellular space. It is found in the extracellular matrix. In terms of biological role, essential for the proper localization of brevican (BCAN), mainly as a perineuronal nets (PNNs)-type deposition in the brainstem and cerebellum thereby playing a key role in the formation and structural organization of PNNs. Contributes to the formation and transmission of inhibitory GABAergic synapses between Purkinje cells and deep cerebellar nuclei neurons. In Mus musculus (Mouse), this protein is Hyaluronan and proteoglycan link protein 4 (Hapln4).